A 589-amino-acid polypeptide reads, in one-letter code: MSQGTIVKVSGPLVIAEGMRDANMFDVVRVSEHRLIGEIIEMHGDRASIQVYEETAGLGPGEPVVSTGAPLSVELGPGLIENIFDGIQRPLVKMREMVGSNITRGIDVTALDRSKKWDFQPTVKKGDKVTAGDVIGKVQETSIVEHRIMVPYGVQGTIEEIKSGSFTVEETVAKVRTENNELVDICMMQKWPVRIGRPYREKLPPNAPLVTGQRVIDTLFPLAKGGVAAVPGPFGSGKTVVQHQLAKWADADIVVYIGCGERGNEMTDVLKEFPELKDPKTGESLMKRTVLIANTSDMPVAAREASIYTGMTIAEYFRDMGYSVALMADSTSRWAEALREMSGRLEEMPGEEGYPAYLGSRLAQFYERAGRVVCLGSDGREGALTAIGAVSPPGGDLSEPVTQATLRIIKVFWGLDSSLAYRRHFPAINWLQSYSLYLDIIGKWISENISRDWETLRSDTMRILQEEAELEEIVRLVGVDALSPSDRLTLEAAKSIREDYLHQNAFHEVDTYTSLNKQYRMLKLILGFYYSGKKALEAGVSIKELFELPVREKIGRAKYTPEDQVNSHFNEIEKELNEQIEALIAKEVQ.

Gly232 to Thr239 lines the ATP pocket.

This sequence belongs to the ATPase alpha/beta chains family.

It carries out the reaction ATP + H2O + 4 H(+)(in) = ADP + phosphate + 5 H(+)(out). Functionally, produces ATP from ADP in the presence of a proton gradient across the membrane. The V-type alpha chain is a catalytic subunit. This Acetivibrio thermocellus (strain ATCC 27405 / DSM 1237 / JCM 9322 / NBRC 103400 / NCIMB 10682 / NRRL B-4536 / VPI 7372) (Clostridium thermocellum) protein is V-type ATP synthase alpha chain.